Reading from the N-terminus, the 212-residue chain is Shuttling pre-60S factor ECM1 (212 aa).

2 disordered regions span residues 28–48 and 188–212; these read KISK…EVKD and SLAE…DVEE. A Phosphoserine modification is found at S188. Polar residues predominate over residues 191–201; that stretch reads EDNTVQKTPTN.

It belongs to the ECM1 family. Associates with the pre-60S ribosomal particle and the nucleopore complex.

Its subcellular location is the nucleus. The protein resides in the nucleolus. It is found in the cytoplasm. Its function is as follows. Pre-ribosomal factor involved in 60S ribosomal protein subunit export from the nucleus. The protein is Shuttling pre-60S factor ECM1 (ECM1) of Saccharomyces cerevisiae (strain ATCC 204508 / S288c) (Baker's yeast).